The chain runs to 481 residues: O-phosphoseryl-tRNA(Sec) selenium transferase (481 aa).

The segment at 1-36 (MKANFGKKEGEYSRLVSKSSNKLLNSLWEKKQIPEE) is tetramerization. Pyridoxal 5'-phosphate is bound at residue Arg-69. A phosphate loop (P-loop) region spans residues 90-100 (GRSGNLLEIQP). 3 residues coordinate substrate: Arg-91, Ser-92, and Gln-99. Lys-277 is subject to N6-(pyridoxal phosphate)lysine. Arg-306 lines the substrate pocket.

It belongs to the SepSecS family. Homotetramer formed by a catalytic dimer and a non-catalytic dimer serving as a binding platform that orients tRNASec for catalysis. Each tetramer binds the CCA ends of two tRNAs which point to the active sites of the catalytic dimer. The cofactor is pyridoxal 5'-phosphate.

It is found in the cytoplasm. It catalyses the reaction O-phospho-L-seryl-tRNA(Sec) + selenophosphate + H2O = L-selenocysteinyl-tRNA(Sec) + 2 phosphate. It functions in the pathway aminoacyl-tRNA biosynthesis; selenocysteinyl-tRNA(Sec) biosynthesis; selenocysteinyl-tRNA(Sec) from L-seryl-tRNA(Sec) (archaeal/eukaryal route): step 2/2. Its function is as follows. Converts O-phosphoseryl-tRNA(Sec) to selenocysteinyl-tRNA(Sec) required for selenoprotein biosynthesis. This is O-phosphoseryl-tRNA(Sec) selenium transferase (secs-1) from Caenorhabditis elegans.